The primary structure comprises 391 residues: Arrestin-C (391 aa).

The segment covering 369-379 (ARQEPGGREES) has biased composition (basic and acidic residues). Residues 369 to 391 (ARQEPGGREESQEALAAEGDEGS) are disordered.

The protein belongs to the arrestin family. In terms of assembly, homodimer; disulfide-linked in response to retinal illumination. Interacts with CXCR4; the interaction is dependent on the C-terminal phosphorylation of CXCR4 and modulates the calcium ion mobilization activity of CXCR4. Interacts with GPR84.

It localises to the photoreceptor inner segment. The protein localises to the cell projection. Its subcellular location is the cilium. The protein resides in the photoreceptor outer segment. Its function is as follows. May play a role in an as yet undefined retina-specific signal transduction. Could bind to photoactivated-phosphorylated red/green opsins. The chain is Arrestin-C (ARR3) from Sus scrofa (Pig).